The primary structure comprises 361 residues: Mitochondrial import receptor subunit TOM40 homolog (361 aa).

A compositionally biased stretch (low complexity) spans 1 to 10; sequence MGNVLAASSP. The tract at residues 1–71 is disordered; sequence MGNVLAASSP…AASAGGTADD (71 aa). Residues 11-36 show a composition bias toward pro residues; the sequence is PAGPPPPPAPPLVGLPPPPPSPPGFT. The segment covering 40–52 has biased composition (gly residues); the sequence is LGGGLGAGAGTGR. Positions 59-71 are enriched in low complexity; it reads GTAAASAGGTADD.

Belongs to the Tom40 family. Forms part of the preprotein translocase complex of the outer mitochondrial membrane (TOM complex) which consists of at least 7 different proteins (TOMM5, TOMM6, TOMM7, TOMM20, TOMM22, TOMM40 and TOMM70). Interacts with mitochondrial targeting sequences. Interacts with TIMM29; linking the TIM22 complex to the TOM complex. Forms a complex with BCAP31 (via C-terminus) which mediates the translocation of components of the mitochondrial membrane respiratory chain NADH dehydrogenase (Complex I) from the cytosol to the mitochondria. Interacts (via N-terminus) with CYP1A1 (via mitochondrial targeting signal); this interaction is required for CYP1A1 translocation across the mitochondrial outer membrane.

The protein resides in the mitochondrion outer membrane. Its function is as follows. Channel-forming protein essential for import of protein precursors into mitochondria. Plays a role in the assembly of the mitochondrial membrane respiratory chain NADH dehydrogenase (Complex I) by forming a complex with BCAP31 and mediating the translocation of Complex I components from the cytosol to the mitochondria. The protein is Mitochondrial import receptor subunit TOM40 homolog of Bos taurus (Bovine).